Reading from the N-terminus, the 152-residue chain is Protein-export protein SecB (152 aa).

This sequence belongs to the SecB family. As to quaternary structure, homotetramer, a dimer of dimers. One homotetramer interacts with 1 SecA dimer.

It localises to the cytoplasm. One of the proteins required for the normal export of preproteins out of the cell cytoplasm. It is a molecular chaperone that binds to a subset of precursor proteins, maintaining them in a translocation-competent state. It also specifically binds to its receptor SecA. This is Protein-export protein SecB from Rickettsia massiliae (strain Mtu5).